The primary structure comprises 441 residues: Enolase (441 aa).

Residue Gln-164 participates in (2R)-2-phosphoglycerate binding. Glu-206 (proton donor) is an active-site residue. The Mg(2+) site is built by Asp-243, Glu-289, and Asp-316. Residues Lys-341, Arg-370, Ser-371, and Lys-392 each contribute to the (2R)-2-phosphoglycerate site. Residue Lys-341 is the Proton acceptor of the active site.

The protein belongs to the enolase family. It depends on Mg(2+) as a cofactor.

The protein localises to the cytoplasm. It is found in the secreted. Its subcellular location is the cell surface. It carries out the reaction (2R)-2-phosphoglycerate = phosphoenolpyruvate + H2O. Its pathway is carbohydrate degradation; glycolysis; pyruvate from D-glyceraldehyde 3-phosphate: step 4/5. In terms of biological role, catalyzes the reversible conversion of 2-phosphoglycerate (2-PG) into phosphoenolpyruvate (PEP). It is essential for the degradation of carbohydrates via glycolysis. This chain is Enolase, found in Leuconostoc citreum (strain KM20).